Consider the following 225-residue polypeptide: Ribosomal RNA small subunit methyltransferase G (225 aa).

Residues Gly71, Leu76, 121 to 122, and Arg139 contribute to the S-adenosyl-L-methionine site; that span reads AE. The segment at 204 to 225 is disordered; sequence VVEARRATPSNGRGRPGRSSRR.

It belongs to the methyltransferase superfamily. RNA methyltransferase RsmG family.

The protein localises to the cytoplasm. Functionally, specifically methylates the N7 position of guanine in position 518 of 16S rRNA. The polypeptide is Ribosomal RNA small subunit methyltransferase G (Mycobacterium sp. (strain JLS)).